Consider the following 185-residue polypeptide: Threonylcarbamoyl-AMP synthase (185 aa).

A YrdC-like domain is found at 1–185; it reads MKNFEQVLKA…AKTSQILRQG (185 aa). The interval 163–185 is disordered; it reads ETSGRNKPSEIRDAKTSQILRQG. Basic and acidic residues predominate over residues 164-177; it reads TSGRNKPSEIRDAK.

The protein belongs to the SUA5 family. TsaC subfamily.

The protein resides in the cytoplasm. The enzyme catalyses L-threonine + hydrogencarbonate + ATP = L-threonylcarbamoyladenylate + diphosphate + H2O. Functionally, required for the formation of a threonylcarbamoyl group on adenosine at position 37 (t(6)A37) in tRNAs that read codons beginning with adenine. Catalyzes the conversion of L-threonine, HCO(3)(-)/CO(2) and ATP to give threonylcarbamoyl-AMP (TC-AMP) as the acyladenylate intermediate, with the release of diphosphate. This chain is Threonylcarbamoyl-AMP synthase, found in Vibrio campbellii (strain ATCC BAA-1116).